The sequence spans 543 residues: Cysteine/serine-rich nuclear protein 2 (543 aa).

M1 carries the post-translational modification N-acetylmethionine. Disordered stretches follow at residues 1–51 (MDAF…SFTP), 281–305 (KRQVSRPAAPDEEPSPTASCSLTGA), and 488–543 (DCNP…PLAV). Over residues 31 to 40 (SSDSADSCDS) the composition is skewed to low complexity. Composition is skewed to polar residues over residues 42–51 (NPPTTASFTP) and 296–305 (PTASCSLTGA).

Belongs to the AXUD1 family.

Its subcellular location is the nucleus. In terms of biological role, binds to the consensus sequence 5'-AGAGTG-3' and has transcriptional activator activity. May play a role in apoptosis. In Homo sapiens (Human), this protein is Cysteine/serine-rich nuclear protein 2 (CSRNP2).